A 70-amino-acid polypeptide reads, in one-letter code: Putative membrane protein insertion efficiency factor (70 aa).

This sequence belongs to the UPF0161 family.

The protein resides in the cell membrane. Its function is as follows. Could be involved in insertion of integral membrane proteins into the membrane. This is Putative membrane protein insertion efficiency factor from Moorella thermoacetica (strain ATCC 39073 / JCM 9320).